The sequence spans 255 residues: Hydroxylmethylpyrimidine kinase (255 aa).

Pyridoxal 5'-phosphate-binding residues include glycine 18, glutamine 43, and asparagine 110. A 4-amino-5-hydroxymethyl-2-methylpyrimidine-binding site is contributed by glutamine 43. The cysteines at positions 195 and 207 are disulfide-linked. Serine 208 is a pyridoxal 5'-phosphate binding site.

The protein belongs to the ThiD family. Homodimer. Crystals show a disulfide bond between Cys-195 and Cys-207. This disulfide is possibly an artifact of the purification and crystallization conditions. However, as it is adjacent to the conserved GSGC of the oxyanion hole, this disulfide may help to orient the backbone amides toward the oxanion intermediate.

The enzyme catalyses 4-amino-5-hydroxymethyl-2-methylpyrimidine + ATP = 4-amino-2-methyl-5-(phosphooxymethyl)pyrimidine + ADP + H(+). It participates in cofactor biosynthesis; thiamine diphosphate biosynthesis. Its activity is regulated as follows. Inhibited by pyridoxal phosphate at high micromolar concentrations. In terms of biological role, catalyzes the phosphorylation of hydroxymethylpyrimidine (HMP) to hydroxymethylpyrimidine phosphate (HMP-P). Unlike other HMPKs, it cannot catalyze the phosphorylation of HMP-P to generate the diphosphate HMP-PP. Shows no activity with pyridoxal, pyridoxamine or pyridoxine. Does not show phosphatase activity. The protein is Hydroxylmethylpyrimidine kinase of Acinetobacter baumannii (strain IS-123).